The sequence spans 62 residues: MRCLPVFVILLLLIASASSVDAQLKTKDDVPLTSVHDNAKGTQHRRIMAGCCPRFYQCCYPG.

The N-terminal stretch at 1 to 22 is a signal peptide; that stretch reads MRCLPVFVILLLLIASASSVDA. The propeptide occupies 23–44; sequence QLKTKDDVPLTSVHDNAKGTQH. P61 carries the post-translational modification Proline amide.

Belongs to the conotoxin T superfamily. Contains 2 disulfide bonds that can be either 'C1-C3, C2-C4' or 'C1-C4, C2-C3', since these disulfide connectivities have been observed for conotoxins with cysteine framework V (for examples, see AC P0DQQ7 and AC P81755). In terms of tissue distribution, expressed by the venom duct.

The protein localises to the secreted. This is Conotoxin Sr5.6 from Conus spurius (Alphabet cone).